Consider the following 722-residue polypeptide: Threonine--tRNA ligase 1, cytoplasmic (722 aa).

Polar residues predominate over residues 1–10 (MSQEKASSPS). A disordered region spans residues 1-48 (MSQEKASSPSGKMDGEKPVDASEEKRKEGGKKKSKDGGGDGGRAELNP). Basic and acidic residues predominate over residues 13 to 27 (MDGEKPVDASEEKRK). The 65-residue stretch at 78 to 142 (DSKPIKVTLP…ETDCTLELLK (65 aa)) folds into the TGS domain. At lysine 242 the chain carries N6-acetyllysine. Position 245 is a phosphothreonine (threonine 245). Tyrosine 297 is subject to Phosphotyrosine. A Phosphothreonine modification is found at threonine 452.

Belongs to the class-II aminoacyl-tRNA synthetase family. As to quaternary structure, homodimer. ISGylated.

Its subcellular location is the cytoplasm. The catalysed reaction is tRNA(Thr) + L-threonine + ATP = L-threonyl-tRNA(Thr) + AMP + diphosphate + H(+). Functionally, catalyzes the attachment of threonine to tRNA(Thr) in a two-step reaction: threonine is first activated by ATP to form Thr-AMP and then transferred to the acceptor end of tRNA(Thr). Also edits incorrectly charged tRNA(Thr) via its editing domain, at the post-transfer stage. The sequence is that of Threonine--tRNA ligase 1, cytoplasmic (Tars1) from Mus musculus (Mouse).